The primary structure comprises 138 residues: UPF0355 protein SSP2326 (138 aa).

Residues 115–138 (NVAFETNQTKSNSHYSEETNGPKS) are disordered. The span at 118 to 138 (FETNQTKSNSHYSEETNGPKS) shows a compositional bias: polar residues.

It belongs to the UPF0355 family.

The protein is UPF0355 protein SSP2326 of Staphylococcus saprophyticus subsp. saprophyticus (strain ATCC 15305 / DSM 20229 / NCIMB 8711 / NCTC 7292 / S-41).